A 268-amino-acid polypeptide reads, in one-letter code: Imidazole glycerol phosphate synthase subunit HisF (268 aa).

Residues Asp-12 and Asp-131 contribute to the active site.

This sequence belongs to the HisA/HisF family. In terms of assembly, heterodimer of HisH and HisF.

Its subcellular location is the cytoplasm. The enzyme catalyses 5-[(5-phospho-1-deoxy-D-ribulos-1-ylimino)methylamino]-1-(5-phospho-beta-D-ribosyl)imidazole-4-carboxamide + L-glutamine = D-erythro-1-(imidazol-4-yl)glycerol 3-phosphate + 5-amino-1-(5-phospho-beta-D-ribosyl)imidazole-4-carboxamide + L-glutamate + H(+). Its pathway is amino-acid biosynthesis; L-histidine biosynthesis; L-histidine from 5-phospho-alpha-D-ribose 1-diphosphate: step 5/9. In terms of biological role, IGPS catalyzes the conversion of PRFAR and glutamine to IGP, AICAR and glutamate. The HisF subunit catalyzes the cyclization activity that produces IGP and AICAR from PRFAR using the ammonia provided by the HisH subunit. The polypeptide is Imidazole glycerol phosphate synthase subunit HisF (Chelativorans sp. (strain BNC1)).